The chain runs to 876 residues: Paramyosin (876 aa).

The tract at residues 1–28 (MSARSAKFMYRSGNAGASGDLSVEYGTD) is nonhelical region. Residues 29–855 (LGALTRLEDK…IRAKHRSWVT (827 aa)) are a coiled coil. The segment at 856-876 (TSQVPGGTRQVFVTQEEQSNY) is nonhelical region.

Belongs to the paramyosin family. In terms of assembly, homodimer.

It localises to the cytoplasm. The protein resides in the myofibril. Functionally, paramyosin is a major structural component of many thick filaments isolated from invertebrate muscles. The polypeptide is Paramyosin (Sarcoptes scabiei (Itch mite)).